Reading from the N-terminus, the 564-residue chain is MFS-type transporter kojT (564 aa).

Residue asparagine 113 is glycosylated (N-linked (GlcNAc...) asparagine). A run of 12 helical transmembrane segments spans residues tryptophan 120–aspartate 140, serine 159–phenylalanine 179, proline 187–proline 207, phenylalanine 217–isoleucine 237, valine 249–glycine 269, tryptophan 278–valine 298, isoleucine 353–leucine 373, glycine 389–valine 409, leucine 437–threonine 457, isoleucine 462–phenylalanine 482, alanine 500–isoleucine 520, and tryptophan 530–tyrosine 550.

Belongs to the major facilitator superfamily.

Its subcellular location is the cell membrane. In terms of biological role, MFS-type transporter; part of the gene cluster that mediates the biosynthesis of 5-hydroxy-2-hydroxymethyl-1,4-pyrone, also know as kojic acid, a by-product in the fermentation process of malting rice that acts as a chelation agent. Involved in the seretion of kojic acid. This is MFS-type transporter kojT from Aspergillus flavus (strain ATCC 200026 / FGSC A1120 / IAM 13836 / NRRL 3357 / JCM 12722 / SRRC 167).